The chain runs to 252 residues: 3-dehydroquinate dehydratase (252 aa).

3-dehydroquinate contacts are provided by residues serine 21, 46 to 48 (EWR), and arginine 82. Histidine 143 (proton donor/acceptor) is an active-site residue. The active-site Schiff-base intermediate with substrate is the lysine 170. 3-dehydroquinate contacts are provided by arginine 213, serine 232, and glutamine 236.

It belongs to the type-I 3-dehydroquinase family. Homodimer.

The enzyme catalyses 3-dehydroquinate = 3-dehydroshikimate + H2O. Its pathway is metabolic intermediate biosynthesis; chorismate biosynthesis; chorismate from D-erythrose 4-phosphate and phosphoenolpyruvate: step 3/7. Involved in the third step of the chorismate pathway, which leads to the biosynthesis of aromatic amino acids. Catalyzes the cis-dehydration of 3-dehydroquinate (DHQ) and introduces the first double bond of the aromatic ring to yield 3-dehydroshikimate. The protein is 3-dehydroquinate dehydratase of Escherichia coli (strain K12 / MC4100 / BW2952).